Reading from the N-terminus, the 137-residue chain is Flagellar basal body rod protein FlgB (137 aa).

It belongs to the flagella basal body rod proteins family. In terms of assembly, the basal body constitutes a major portion of the flagellar organelle and consists of a number of rings mounted on a central rod. In Gram-negative bacteria, at least four rings, L, P, S and M are present, whereas Gram-positive bacteria lack the L and P rings. The rod consists of about 26 subunits of FlgG in the distal portion, and FlgB, FlgC and FlgF build up the proximal portion of the rod with about 6 subunits each. Rod assembly occurs by export via the flagellum-specific pathway of its constituent proteins and by their incorporation into the rod structure in the probable order of FlgB, FlgC, FlgF and FlgG. Another protein, FliE, also assembles onto the stable rod structure.

It localises to the bacterial flagellum basal body. Functionally, structural component of flagellum, the bacterial motility apparatus. Part of the rod structure of flagellar basal body. In Yersinia ruckeri, this protein is Flagellar basal body rod protein FlgB.